A 562-amino-acid polypeptide reads, in one-letter code: uncharacterized protein (562 aa).

A run of 5 helical transmembrane segments spans residues 15–34 (WGGGVAHSVLILSLVIAFGI), 41–63 (VAGISLGVTWILFVGIVFGHFNL), 78–97 (LILFVYSIGLQVGPGFFSAF), 104–126 (LNMLAMIVVFAGVIITLALHFIT), and 165–187 (IALGYAVAYPLGVVGCIMSLLGL). 2 consecutive RCK C-terminal domains span residues 204–286 (QGLG…ITAF) and 289–374 (KPIE…VLGN). Helical transmembrane passes span 384-403 (LIPIFLGIALGCILGSIPFM), 413-430 (LGLAGGPLIVSILISRFG), 450-472 (IGISLFLACVGLGAGDGFVETII), 476-498 (GYVWIAYGMIITIVPLLLAGFIG), 505-524 (NYYTLIGVLAGSTTNPPALA), and 539-561 (YATVYPLTMFLRVLTAQLLILSL).

This sequence belongs to the AAE transporter (TC 2.A.81) family.

It localises to the cell membrane. This is an uncharacterized protein from Bacteroides fragilis (strain YCH46).